A 100-amino-acid polypeptide reads, in one-letter code: uncharacterized protein (100 aa).

Residues 1–86 (MRGTRRGPSG…RHRPPEVTEP (86 aa)) are disordered. The segment covering 35-48 (DTPPPRAPPPPPPL) has biased composition (pro residues).

This is an uncharacterized protein from Human herpesvirus 6A (strain Uganda-1102) (HHV-6 variant A).